The chain runs to 400 residues: Serine/threonine-protein kinase AFC3 (400 aa).

The interval 1–29 is disordered; that stretch reads MIANGFESMDKERVRKRPRMTWDEAPAEP. One can recognise a Protein kinase domain in the interval 71–396; it reads YKILSKMGEG…ANEALDHPFF (326 aa). ATP is bound by residues 77-85 and lysine 100; that span reads MGEGTFGRV. Aspartate 196 (proton acceptor) is an active-site residue.

It belongs to the protein kinase superfamily. CMGC Ser/Thr protein kinase family. Lammer subfamily.

The enzyme catalyses L-seryl-[protein] + ATP = O-phospho-L-seryl-[protein] + ADP + H(+). It catalyses the reaction L-threonyl-[protein] + ATP = O-phospho-L-threonyl-[protein] + ADP + H(+). It carries out the reaction L-tyrosyl-[protein] + ATP = O-phospho-L-tyrosyl-[protein] + ADP + H(+). The polypeptide is Serine/threonine-protein kinase AFC3 (AFC3) (Arabidopsis thaliana (Mouse-ear cress)).